The chain runs to 73 residues: RNA-binding protein Hfq (73 aa).

Residues 8–68 (DQFLNQIRKD…ISTFAPQKNV (61 aa)) form the Sm domain.

It belongs to the Hfq family. As to quaternary structure, homohexamer.

RNA chaperone that binds small regulatory RNA (sRNAs) and mRNAs to facilitate mRNA translational regulation in response to envelope stress, environmental stress and changes in metabolite concentrations. Also binds with high specificity to tRNAs. This is RNA-binding protein Hfq from Bacillus velezensis (strain DSM 23117 / BGSC 10A6 / LMG 26770 / FZB42) (Bacillus amyloliquefaciens subsp. plantarum).